The primary structure comprises 607 residues: CUB and zona pellucida-like domain-containing protein 1 (607 aa).

The signal sequence occupies residues 1–19; the sequence is MEVTGRLFIWAILAVSCGA. Residues cysteine 17 and cysteine 58 are joined by a disulfide bond. CUB domains follow at residues 20–146 and 154–265; these read QLNS…YFFS and CGGD…YTSI. The Lumenal segment spans residues 20-568; that stretch reads QLNSTEAEGK…AEISNQPLSR (549 aa). N-linked (GlcNAc...) asparagine glycosylation is found at asparagine 22, asparagine 57, and asparagine 67. Disulfide bonds link cysteine 85-cysteine 107, cysteine 154-cysteine 180, and cysteine 207-cysteine 229. The 244-residue stretch at 276 to 519 folds into the ZP domain; the sequence is SCVSDKMRVI…SRCNQGCVPR (244 aa). Asparagine 419 carries an N-linked (GlcNAc...) asparagine glycan. Cysteines 442 and 498 form a disulfide. The helical transmembrane segment at 569–589 threads the bilayer; that stretch reads LYLFSFMVLALNVVIVAITTV. The Cytoplasmic portion of the chain corresponds to 590-607; that stretch reads KHFLNRWMDHRYQKLQVY.

As to expression, highly expressed in pancreatic acinar cells. Also expressed in epithelium of the uterus during late pregnancy but not detected in non-pregnant uterus or in a variety of other adult and fetal tissues.

Its subcellular location is the zymogen granule membrane. Functionally, localized to zymogen granules, where it functions in trypsinogen activation. May indirectly regulate cell motility, cell-cell and cell/extracellular matrix interactions. This Mus musculus (Mouse) protein is CUB and zona pellucida-like domain-containing protein 1.